We begin with the raw amino-acid sequence, 477 residues long: MSAAPGLLHQELSCPLCLQLFDAPVTAECGHSFCRACLGRVAGEPAADGTVLCPCCQAPTRPQALSTNLQLARLVEGLAQVPQGHCEEHLDPLSIYCEQDRALVCGVCASLGSHRGHRLLPAAEAHARLKTQLPQQKLQLQEACMRKEKSVAVLEHQLVEVEETVRQFRGAVGEQLGKMRVFLAALEGSLDREAERVRGEAGVALRRELGSLNSYLEQLRQMEKVLEEVADKPQTEFLMKYCLVTSRLQKILAESPPPARLDIQLPIISDDFKFQVWRKMFRALMPALEELTFDPSSAHPSLVVSSSGRRVECSEQKAPPAGEDPRQFDKAVAVVAHQQLSEGEHYWEVDVGDKPRWALGVIAAEAPRRGRLHAVPSQGLWLLGLREGKILEAHVEAKEPRALRSPERRPTRIGLYLSFGDGVLSFYDASDADALVPLFAFHERLPRPVYPFFDVCWHDKGKNAQPLLLVGPEGAEA.

The Zn(2+) site is built by cysteine 14, cysteine 17, cysteine 29, histidine 31, cysteine 34, cysteine 37, cysteine 53, cysteine 56, cysteine 86, histidine 89, cysteine 97, aspartate 100, cysteine 105, cysteine 108, histidine 114, and histidine 117. The RING-type zinc-finger motif lies at 14 to 57 (CPLCLQLFDAPVTAECGHSFCRACLGRVAGEPAADGTVLCPCCQ). A B box-type zinc finger spans residues 81-122 (VPQGHCEEHLDPLSIYCEQDRALVCGVCASLGSHRGHRLLPA). A coiled-coil region spans residues 135–232 (QQKLQLQEAC…EKVLEEVADK (98 aa)). The residue at position 144 (cysteine 144) is an S-nitrosocysteine. Serine 255 carries the phosphoserine modification. Positions 271-475 (DFKFQVWRKM…PLLLVGPEGA (205 aa)) constitute a B30.2/SPRY domain.

Belongs to the TRIM/RBCC family. As to quaternary structure, homodimer. Homooligomer; disulfide-linked. Oligomerizes on the phospholipid membrane. Interacts with DYSF and CAV3. In terms of processing, disulfide bond formation at Cys-242 occurs in case of membrane damage that cause the entry of the oxidized milieu of the extracellular space, resulting in homooligomerization. S-nitrosylation at Cys-144 stabilizes TRIM72 and protects against oxidation-induced protein degradation and cell death.

The protein resides in the cell membrane. The protein localises to the sarcolemma. It localises to the cytoplasmic vesicle membrane. The catalysed reaction is S-ubiquitinyl-[E2 ubiquitin-conjugating enzyme]-L-cysteine + [acceptor protein]-L-lysine = [E2 ubiquitin-conjugating enzyme]-L-cysteine + N(6)-ubiquitinyl-[acceptor protein]-L-lysine.. It participates in protein modification; protein ubiquitination. Specifically binds phosphatidylserine. The binding to phospholipids enhances ubiquitination activity. Its function is as follows. Muscle-specific E3 ubiquitin-protein ligase that plays a central role in cell membrane repair by nucleating the assembly of the repair machinery at injury sites. Its ubiquitination activity is mediated by E2 ubiquitin-conjugating enzymes UBE2D1, UBE2D2 and UBE2D3. Acts as a sensor of oxidation: upon membrane damage, entry of extracellular oxidative environment results in disulfide bond formation and homooligomerization at the injury site. This oligomerization acts as a nucleation site for recruitment of TRIM72-containing vesicles to the injury site, leading to membrane patch formation. Probably acts upstream of the Ca(2+)-dependent membrane resealing process. Required for transport of DYSF to sites of cell injury during repair patch formation. Regulates membrane budding and exocytosis. May be involved in the regulation of the mobility of KCNB1-containing endocytic vesicles. The protein is Tripartite motif-containing protein 72 of Homo sapiens (Human).